A 60-amino-acid chain; its full sequence is UPF0434 protein NMC0623 (60 aa).

Belongs to the UPF0434 family.

This is UPF0434 protein NMC0623 from Neisseria meningitidis serogroup C / serotype 2a (strain ATCC 700532 / DSM 15464 / FAM18).